The chain runs to 390 residues: Chorismate synthase 1 (390 aa).

2 residues coordinate NADP(+): Arg-39 and Arg-45. A disordered region spans residues 95–117 (EQEEKEMKRKVTKPRPGHADLNG). Residues 132–134 (RSS), 253–254 (NA), Gly-298, 313–317 (KPIPT), and Arg-339 contribute to the FMN site.

This sequence belongs to the chorismate synthase family. In terms of assembly, homotetramer. Requires FMNH2 as cofactor.

It carries out the reaction 5-O-(1-carboxyvinyl)-3-phosphoshikimate = chorismate + phosphate. The protein operates within metabolic intermediate biosynthesis; chorismate biosynthesis; chorismate from D-erythrose 4-phosphate and phosphoenolpyruvate: step 7/7. Catalyzes the anti-1,4-elimination of the C-3 phosphate and the C-6 proR hydrogen from 5-enolpyruvylshikimate-3-phosphate (EPSP) to yield chorismate, which is the branch point compound that serves as the starting substrate for the three terminal pathways of aromatic amino acid biosynthesis. This reaction introduces a second double bond into the aromatic ring system. The polypeptide is Chorismate synthase 1 (Bacillus cereus (strain ATCC 14579 / DSM 31 / CCUG 7414 / JCM 2152 / NBRC 15305 / NCIMB 9373 / NCTC 2599 / NRRL B-3711)).